Consider the following 341-residue polypeptide: S-adenosylmethionine:tRNA ribosyltransferase-isomerase (341 aa).

It belongs to the QueA family. Monomer.

The protein resides in the cytoplasm. It carries out the reaction 7-aminomethyl-7-carbaguanosine(34) in tRNA + S-adenosyl-L-methionine = epoxyqueuosine(34) in tRNA + adenine + L-methionine + 2 H(+). Its pathway is tRNA modification; tRNA-queuosine biosynthesis. Transfers and isomerizes the ribose moiety from AdoMet to the 7-aminomethyl group of 7-deazaguanine (preQ1-tRNA) to give epoxyqueuosine (oQ-tRNA). This chain is S-adenosylmethionine:tRNA ribosyltransferase-isomerase, found in Clostridium botulinum (strain Alaska E43 / Type E3).